Here is a 192-residue protein sequence, read N- to C-terminus: UPF0301 protein Bphyt_0868 (192 aa).

The protein belongs to the UPF0301 (AlgH) family.

This is UPF0301 protein Bphyt_0868 from Paraburkholderia phytofirmans (strain DSM 17436 / LMG 22146 / PsJN) (Burkholderia phytofirmans).